The following is a 622-amino-acid chain: MSEREERRFVEIPRESVRLMAESTGLELSDEVAALLAEDVCYRLREATQNSSQFMKHTKRRKLTVEDFNRALRWSSVEAVCGYGSQEALPMRPAREGELYFPEDREVNLVELALATNIPKGCAETAVRVHVSYLDGKGNLAPQGSVPSAVSSLTDDLLKYYHQVTRAVLGDDPQLMKVALQDLQTNSKIGALLPYFVYVVSGVKSVSHDLEQLHRLLQVARSLFRNPHLCLGPYVRCLVGSVLYCVLEPLAASINPLNDHWTLRDGAALLLSHIFWTHGDLVSGLYQHILLSLQKILADPVRPLCCHYGAVVGLHALGWKAVERVLYPHLSTYWTNLQAVLDDYSVSNAQVKADGHKVYGAILVAVERLLKMKAQAAEPNRGGPGGRGCRRLDDLPWDSLLFQESSSGGGAEPSFGSGLPLPPGGAGPEDPSLSVTLADIYRELYAFFGDSLATRFGTGQPAPTAPRPPGDKKEPAAAPDSVRKMPQLTASAIVSPHGDESPRGSGGGGPASASGPAASESRPLPRVHRARGAPRQQGPGTGTRDVFQKSRFAPRGAPHFRFIIAGRQAGRRCRGRLFQTAFPAPYGPSPASRYVQKLPMIGRTSRPARRWALSDYSLYLPL.

Disordered stretches follow at residues 403 to 430 (QESS…GPED) and 457 to 546 (GTGQ…TRDV). Phosphoserine is present on residues Ser495 and Ser501. The segment covering 511–522 (ASASGPAASESR) has biased composition (low complexity). An asymmetric dimethylarginine mark is found at Arg555, Arg561, and Arg593.

It belongs to the TAF6 family. In terms of assembly, the PCAF complex is composed of a number of TBP-associated factors (TAFS), such as TAF5, TAF5L, TAF6, TAF6L, TAF9, TAF10 and TAF12, PCAF, and also PCAF-associated factors (PAFs), such as TADA2L/ADA2, TADA3L/ADA3 and SPT3. Component of the STAGA transcription coactivator-HAT complex, at least composed of SUPT3H, GCN5L2, TAF5L, TAF6L, SUPT7L, TADA3L, TAD1L, TAF10, TAF12, TRRAP and TAF9.

It localises to the nucleus. Functions as a component of the PCAF complex. The PCAF complex is capable of efficiently acetylating histones in a nucleosomal context. The PCAF complex could be considered as the human version of the yeast SAGA complex. With TAF5L, acts as an epigenetic regulator essential for somatic reprogramming. Regulates target genes through H3K9ac deposition and MYC recruitment which trigger MYC regulatory network to orchestrate gene expression programs to control embryonic stem cell state. Functions with MYC to activate target gene expression through RNA polymerase II pause release. This Homo sapiens (Human) protein is TAF6-like RNA polymerase II p300/CBP-associated factor-associated factor 65 kDa subunit 6L.